The chain runs to 712 residues: Solute carrier organic anion transporter family member 1C1 (712 aa).

Residues methionine 1–lysine 43 lie on the Cytoplasmic side of the membrane. The helical transmembrane segment at valine 44–leucine 63 threads the bilayer. Residues lysine 64–glycine 82 are Extracellular-facing. A helical transmembrane segment spans residues valine 83–glycine 103. The Cytoplasmic portion of the chain corresponds to alanine 104–proline 109. Residues lysine 110 to glutamate 134 traverse the membrane as a helical segment. The Extracellular portion of the chain corresponds to glutamine 135 to serine 184. A glycan (N-linked (GlcNAc...) asparagine) is linked at asparagine 146. The helical transmembrane segment at serine 185–aspartate 213 threads the bilayer. Over aspartate 214–alanine 232 the chain is Cytoplasmic. Residues isoleucine 233–isoleucine 253 form a helical membrane-spanning segment. Topologically, residues glycine 254–valine 271 are extracellular. The helical transmembrane segment at glycine 272 to proline 296 threads the bilayer. At lysine 297–asparagine 348 the chain is on the cytoplasmic side. A helical membrane pass occupies residues leucine 349–phenylalanine 370. Over glycine 371–arginine 390 the chain is Extracellular. A helical membrane pass occupies residues alanine 391–methionine 414. Over lysine 415–arginine 418 the chain is Cytoplasmic. A helical membrane pass occupies residues isoleucine 419–leucine 442. The Extracellular portion of the chain corresponds to phenylalanine 443–phenylalanine 554. In terms of domain architecture, Kazal-like spans arginine 470 to glycine 525. 3 disulfide bridges follow: cysteine 476–cysteine 506, cysteine 482–cysteine 502, and cysteine 491–cysteine 523. N-linked (GlcNAc...) asparagine glycans are attached at residues asparagine 510, asparagine 520, and asparagine 533. Residues leucine 555–leucine 577 form a helical membrane-spanning segment. Residues arginine 578–serine 586 are Cytoplasmic-facing. Residues phenylalanine 587–isoleucine 612 form a helical membrane-spanning segment. The Extracellular segment spans residues aspartate 613–threonine 646. A helical membrane pass occupies residues valine 647 to leucine 664. Topologically, residues lysine 665–leucine 712 are cytoplasmic.

Belongs to the organo anion transporter (TC 2.A.60) family. Highly expressed in brain and in Leydig cells in testis. Localized in nests of Leydig cells (at protein level). Expressed in choroid plexus (at protein level). Not strongly enriched in cerebral microvessels.

It is found in the cell membrane. It carries out the reaction 3,3',5'-triiodo-L-thyronine(out) = 3,3',5'-triiodo-L-thyronine(in). The catalysed reaction is L-thyroxine(out) = L-thyroxine(in). It catalyses the reaction L-thyroxine sulfate(out) = L-thyroxine sulfate(in). Functionally, mediates the Na(+)-independent high affinity transport of organic anions such as the thyroid hormones L-thyroxine (T4), L-thyroxine sulfate (T4S), and 3,3',5'-triiodo-L-thyronine (reverse T3, rT3) at the plasma membrane. Regulates T4 levels in different brain regions by transporting T4, and also by serving as an export pump for T4S, which is a source of T4 after hydrolysis by local sulfatases. Increases the access of these substrates to the intracellular sites where they are metabolized by the deiodinases. Other potential substrates, such as triiodothyronine (T3), 17-beta-glucuronosyl estradiol (17beta-estradiol 17-O-(beta-D-glucuronate)), estrone-3-sulfate (E1S) and sulfobromophthalein (BSP) are transported with much lower efficiency. Transports T4 and E1S in a pH-insensitive manner. Facilitates the transport of thyroid hormones across the blood-brain barrier and into glia and neuronal cells in the brain. This Homo sapiens (Human) protein is Solute carrier organic anion transporter family member 1C1 (SLCO1C1).